Consider the following 215-residue polypeptide: Enolase-phosphatase E1 (215 aa).

The Mg(2+) site is built by Asp11 and Glu13. Residues 117 to 118 (SS) and Lys151 each bind substrate. Asp174 is a binding site for Mg(2+).

It belongs to the HAD-like hydrolase superfamily. MasA/MtnC family. As to quaternary structure, monomer. Mg(2+) serves as cofactor.

Its subcellular location is the cytoplasm. It is found in the nucleus. It carries out the reaction 5-methylsulfanyl-2,3-dioxopentyl phosphate + H2O = 1,2-dihydroxy-5-(methylsulfanyl)pent-1-en-3-one + phosphate. The protein operates within amino-acid biosynthesis; L-methionine biosynthesis via salvage pathway; L-methionine from S-methyl-5-thio-alpha-D-ribose 1-phosphate: step 3/6. Its pathway is amino-acid biosynthesis; L-methionine biosynthesis via salvage pathway; L-methionine from S-methyl-5-thio-alpha-D-ribose 1-phosphate: step 4/6. In terms of biological role, bifunctional enzyme that catalyzes the enolization of 2,3-diketo-5-methylthiopentyl-1-phosphate (DK-MTP-1-P) into the intermediate 2-hydroxy-3-keto-5-methylthiopentenyl-1-phosphate (HK-MTPenyl-1-P), which is then dephosphorylated to form the acireductone 1,2-dihydroxy-3-keto-5-methylthiopentene (DHK-MTPene). This is Enolase-phosphatase E1 (utr4) from Schizosaccharomyces japonicus (strain yFS275 / FY16936) (Fission yeast).